We begin with the raw amino-acid sequence, 507 residues long: Maturase K (507 aa).

This sequence belongs to the intron maturase 2 family. MatK subfamily.

The protein resides in the plastid. The protein localises to the chloroplast. In terms of biological role, usually encoded in the trnK tRNA gene intron. Probably assists in splicing its own and other chloroplast group II introns. The protein is Maturase K of Browningia hertlingiana (Cactus).